The chain runs to 216 residues: GTP cyclohydrolase 1 (216 aa).

Zn(2+) is bound by residues C108, H111, and C179.

Belongs to the GTP cyclohydrolase I family. Toroid-shaped homodecamer, composed of two pentamers of five dimers.

It carries out the reaction GTP + H2O = 7,8-dihydroneopterin 3'-triphosphate + formate + H(+). Its pathway is cofactor biosynthesis; 7,8-dihydroneopterin triphosphate biosynthesis; 7,8-dihydroneopterin triphosphate from GTP: step 1/1. The sequence is that of GTP cyclohydrolase 1 from Shewanella sp. (strain MR-7).